The chain runs to 558 residues: Glutamine--tRNA ligase (558 aa).

Residues 34 to 44 (PEPNGYLHIGH) carry the 'HIGH' region motif. ATP contacts are provided by residues 35–37 (EPN) and 41–47 (HIGHAKS). L-glutamine contacts are provided by Asp-67 and Tyr-212. Residues Thr-231, 261-262 (RL), and 269-271 (LSK) contribute to the ATP site. The 'KMSKS' region signature appears at 268-272 (VLSKR).

The protein belongs to the class-I aminoacyl-tRNA synthetase family. Monomer.

The protein localises to the cytoplasm. It carries out the reaction tRNA(Gln) + L-glutamine + ATP = L-glutaminyl-tRNA(Gln) + AMP + diphosphate. This chain is Glutamine--tRNA ligase, found in Pseudoalteromonas atlantica (strain T6c / ATCC BAA-1087).